Here is a 949-residue protein sequence, read N- to C-terminus: MAM domain-containing glycosylphosphatidylinositol anchor protein 1 (949 aa).

Residues 1-18 (MEMICVLFLSLVPAYSRG) form the signal peptide. Ig-like domains lie at 24 to 125 (PAQA…IRVD) and 132 to 230 (PVLT…KSIT). Asparagine 42 and asparagine 90 each carry an N-linked (GlcNAc...) asparagine glycan. Cystine bridges form between cysteine 60-cysteine 108 and cysteine 157-cysteine 214. Residues asparagine 235, asparagine 247, asparagine 257, asparagine 292, asparagine 307, and asparagine 331 are each glycosylated (N-linked (GlcNAc...) asparagine). The 84-residue stretch at 240–323 (PALKLSVNET…VGNPAKKTVN (84 aa)) folds into the Ig-like 3 domain. Residues cysteine 262 and cysteine 308 are joined by a disulfide bond. Ig-like domains follow at residues 338-432 (PDVI…VEVN), 440-531 (PTIS…ALVQ), and 537-625 (PPVV…FQVS). Cysteine 357 and cysteine 415 are disulfide-bonded. Residue asparagine 432 is glycosylated (N-linked (GlcNAc...) asparagine). 2 disulfide bridges follow: cysteine 463-cysteine 513 and cysteine 559-cysteine 609. 3 N-linked (GlcNAc...) asparagine glycosylation sites follow: asparagine 577, asparagine 649, and asparagine 820. The region spanning 637 to 737 (TPNPTLSQKQ…ARIIRYMEPI (101 aa)) is the Fibronectin type-III domain. The MAM domain occupies 745 to 912 (NTCRFEDEKI…VTLKKGDCPR (168 aa)). Serine 926 is lipidated: GPI-anchor amidated serine. Positions 927–949 (GVSAQHGPCLCGPLTFFLYVLLR) are cleaved as a propeptide — removed in mature form.

Interacts heterophilically through its MAM domain with proteins in axon-rich regions and through its Ig-like domains with proteins in differentiating muscle. As to expression, in the embryonic brachial spinal cord, selectively expressed by medial lateral motor column neurons, some populations of dorsal root ganglion neurons, and interneurons.

It is found in the cell membrane. Functionally, required for radial migration of cortical neurons in the superficial layer of the neocortex. The protein is MAM domain-containing glycosylphosphatidylinositol anchor protein 1 of Gallus gallus (Chicken).